The sequence spans 715 residues: Macrolide export ATP-binding/permease protein MacB (715 aa).

Positions 4-245 (IELQDIRKTY…VSKAAPAQSK (242 aa)) constitute an ABC transporter domain. An ATP-binding site is contributed by 40–47 (GTSGSGKT). A disordered region spans residues 229-251 (AVGDMPQVSKAAPAQSKPVHSAM). 4 consecutive transmembrane segments (helical) span residues 277-297 (AALTTLGIIIGVAAVIAMMEI), 592-612 (LLLAVALISLIVGGVGIMNIM), 639-659 (QFLFEAVLLCFLGGAVGILVG), and 681-701 (ILAAVGVSATVGIVFGYYPAW).

It belongs to the ABC transporter superfamily. Macrolide exporter (TC 3.A.1.122) family. As to quaternary structure, homodimer.

It is found in the cell inner membrane. In terms of biological role, non-canonical ABC transporter that contains transmembrane domains (TMD), which form a pore in the inner membrane, and an ATP-binding domain (NBD), which is responsible for energy generation. Confers resistance against macrolides. The sequence is that of Macrolide export ATP-binding/permease protein MacB from Syntrophobacter fumaroxidans (strain DSM 10017 / MPOB).